The primary structure comprises 387 residues: Pepsin A-5 (387 aa).

Residues 1–15 (MKWLWVLGLVALSEC) form the signal peptide. A propeptide spans 16–62 (LVKIPLMKIKSMRENLRESQVLKDYLEKYPRSRAHVLLEQRRNPAVT) (activation peptide). Positions 74–384 (YIGIISIGTP…DRANNRIGLA (311 aa)) constitute a Peptidase A1 domain. Aspartate 92 is a catalytic residue. Intrachain disulfides connect cysteine 105-cysteine 110 and cysteine 266-cysteine 270. Aspartate 275 is a catalytic residue. Cysteine 309 and cysteine 343 form a disulfide bridge.

Belongs to the peptidase A1 family. As to expression, expressed in glandular chief cells of the neonatal stomach. Expressed in yolk sacs of the placenta (at protein level).

The protein localises to the secreted. It carries out the reaction Preferential cleavage: hydrophobic, preferably aromatic, residues in P1 and P1' positions. Cleaves 1-Phe-|-Val-2, 4-Gln-|-His-5, 13-Glu-|-Ala-14, 14-Ala-|-Leu-15, 15-Leu-|-Tyr-16, 16-Tyr-|-Leu-17, 23-Gly-|-Phe-24, 24-Phe-|-Phe-25 and 25-Phe-|-Tyr-26 bonds in the B chain of insulin.. With respect to regulation, inhibited by pepstatin A. Its function is as follows. Shows particularly broad specificity; although bonds involving phenylalanine and leucine are preferred, many others are also cleaved to some extent. May play a role as a specialized neonatal digestive enzyme. The protein is Pepsin A-5 of Mus musculus (Mouse).